The chain runs to 173 residues: RNA pyrophosphohydrolase (173 aa).

The Nudix hydrolase domain occupies 11–164 (PYRKCVGIVV…KKHVYMKVVS (154 aa)). The Nudix box signature appears at 52-73 (GGIDEDEKPLDAAYRELYEETG).

This sequence belongs to the Nudix hydrolase family. RppH subfamily. A divalent metal cation serves as cofactor.

Its function is as follows. Accelerates the degradation of transcripts by removing pyrophosphate from the 5'-end of triphosphorylated RNA, leading to a more labile monophosphorylated state that can stimulate subsequent ribonuclease cleavage. The polypeptide is RNA pyrophosphohydrolase (Bartonella tribocorum (strain CIP 105476 / IBS 506)).